The following is a 454-amino-acid chain: Exopolyphosphatase PRUNE1 (454 aa).

Residue methionine 1 is modified to N-acetylmethionine. Aspartate 28, aspartate 30, aspartate 106, and aspartate 179 together coordinate Mn(2+). Positions 106–108 match the DHH motif motif; it reads DHH. The interval 394–421 is essential for homodimerization; sequence SLISGLSQDEEDPPLPPTPMNSLVDECP. Residues 397-420 are disordered; that stretch reads SGLSQDEEDPPLPPTPMNSLVDEC. The residue at position 400 (serine 400) is a Phosphoserine. The residue at position 411 (threonine 411) is a Phosphothreonine. Serine 415 carries the phosphoserine modification.

It belongs to the PPase class C family. Prune subfamily. Homooligomer. Able to homodimerize via its C-terminal domain. Interacts with NME1. Interacts with GSK3; at focal adhesion complexes where paxillin and vinculin are colocalized. Interacts with alpha and beta tubulin. Mn(2+) serves as cofactor.

Its subcellular location is the cytoplasm. It is found in the nucleus. The protein localises to the cell junction. It localises to the focal adhesion. The catalysed reaction is diphosphate + H2O = 2 phosphate + H(+). Its activity is regulated as follows. Activated by magnesium ions and inhibited by manganese ions. Inhibited by dipyridamole, moderately sensitive to IBMX and inhibited by vinpocetine. Its function is as follows. Phosphodiesterase (PDE) that has higher activity toward cAMP than cGMP, as substrate. Plays a role in cell proliferation, migration and differentiation, and acts as a negative regulator of NME1. Plays a role in the regulation of neurogenesis. Involved in the regulation of microtubule polymerization. The polypeptide is Exopolyphosphatase PRUNE1 (Prune1) (Mus musculus (Mouse)).